The sequence spans 152 residues: Lipoprotein signal peptidase (152 aa).

3 helical membrane passes run 5-25 (LFVLSLILLVALDQLSKFWIV), 61-81 (WFFVVITVLVIGYAIYYLATH), and 84-104 (LNIWKQLALLLIISGGIGNFI). Active-site residues include Asp-114 and Asp-130. A helical membrane pass occupies residues 125 to 145 (IFNVADSYLTVGVILLVICLW).

This sequence belongs to the peptidase A8 family.

The protein resides in the cell membrane. The enzyme catalyses Release of signal peptides from bacterial membrane prolipoproteins. Hydrolyzes -Xaa-Yaa-Zaa-|-(S,diacylglyceryl)Cys-, in which Xaa is hydrophobic (preferably Leu), and Yaa (Ala or Ser) and Zaa (Gly or Ala) have small, neutral side chains.. The protein operates within protein modification; lipoprotein biosynthesis (signal peptide cleavage). In terms of biological role, this protein specifically catalyzes the removal of signal peptides from prolipoproteins. In Streptococcus pyogenes serotype M18 (strain MGAS8232), this protein is Lipoprotein signal peptidase.